Consider the following 138-residue polypeptide: Small ribosomal subunit protein uS11c (138 aa).

Positions 1–21 (MTKAIQKIGSRRNGRIASRKN) are disordered. Residues 9–21 (GSRRNGRIASRKN) are compositionally biased toward basic residues.

This sequence belongs to the universal ribosomal protein uS11 family. As to quaternary structure, part of the 30S ribosomal subunit.

The protein localises to the plastid. It is found in the chloroplast. This Ceratophyllum demersum (Rigid hornwort) protein is Small ribosomal subunit protein uS11c.